We begin with the raw amino-acid sequence, 176 residues long: NAD(P)H-quinone oxidoreductase subunit 6, chloroplastic (176 aa).

The next 5 membrane-spanning stretches (helical) occupy residues 10–30, 32–52, 61–81, 95–115, and 152–172; these read FLLVFLGLGLILGGLGVVLLT, PIFSAFSLGLVLVCISLFYIL, AQLLIYVGAINVLILFAVMFM, VGNGLTSLICTSLFVLLITII, and FFLPFEFISIILLVALIGAIA.

The protein belongs to the complex I subunit 6 family. As to quaternary structure, NDH is composed of at least 16 different subunits, 5 of which are encoded in the nucleus.

Its subcellular location is the plastid. It localises to the chloroplast thylakoid membrane. The enzyme catalyses a plastoquinone + NADH + (n+1) H(+)(in) = a plastoquinol + NAD(+) + n H(+)(out). The catalysed reaction is a plastoquinone + NADPH + (n+1) H(+)(in) = a plastoquinol + NADP(+) + n H(+)(out). NDH shuttles electrons from NAD(P)H:plastoquinone, via FMN and iron-sulfur (Fe-S) centers, to quinones in the photosynthetic chain and possibly in a chloroplast respiratory chain. The immediate electron acceptor for the enzyme in this species is believed to be plastoquinone. Couples the redox reaction to proton translocation, and thus conserves the redox energy in a proton gradient. The chain is NAD(P)H-quinone oxidoreductase subunit 6, chloroplastic (ndhG) from Populus alba (White poplar).